The chain runs to 174 residues: Interferon gamma (174 aa).

Positions 1 to 23 (MNSTRCILALLLCLTQAMSGCYG) are cleaved as a signal peptide. Position 24 is a pyrrolidone carboxylic acid (Q24). N-linked (GlcNAc...) asparagine glycans are attached at residues N39 and N106.

This sequence belongs to the type II (or gamma) interferon family. Homodimer. Interacts with IFNGR1 (via extracellular domain); this interaction promotes IFNGR1 dimerization. As to expression, released primarily from activated T lymphocytes.

The protein localises to the secreted. Its function is as follows. Type II interferon produced by immune cells such as T-cells and NK cells that plays crucial roles in antimicrobial, antiviral, and antitumor responses by activating effector immune cells and enhancing antigen presentation. Primarily signals through the JAK-STAT pathway after interaction with its receptor IFNGR1 to affect gene regulation. Upon IFNG binding, IFNGR1 intracellular domain opens out to allow association of downstream signaling components JAK2, JAK1 and STAT1, leading to STAT1 activation, nuclear translocation and transcription of IFNG-regulated genes. Many of the induced genes are transcription factors such as IRF1 that are able to further drive regulation of a next wave of transcription. Plays a role in class I antigen presentation pathway by inducing a replacement of catalytic proteasome subunits with immunoproteasome subunits. In turn, increases the quantity, quality, and repertoire of peptides for class I MHC loading. Increases the efficiency of peptide generation also by inducing the expression of activator PA28 that associates with the proteasome and alters its proteolytic cleavage preference. Up-regulates as well MHC II complexes on the cell surface by promoting expression of several key molecules such as cathepsins B/CTSB, H/CTSH, and L/CTSL. Participates in the regulation of hematopoietic stem cells during development and under homeostatic conditions by affecting their development, quiescence, and differentiation. The protein is Interferon gamma (IFNG) of Phodopus sungorus (Striped hairy-footed hamster).